The chain runs to 226 residues: 2-C-methyl-D-erythritol 4-phosphate cytidylyltransferase (226 aa).

Belongs to the IspD/TarI cytidylyltransferase family. IspD subfamily.

The catalysed reaction is 2-C-methyl-D-erythritol 4-phosphate + CTP + H(+) = 4-CDP-2-C-methyl-D-erythritol + diphosphate. The protein operates within isoprenoid biosynthesis; isopentenyl diphosphate biosynthesis via DXP pathway; isopentenyl diphosphate from 1-deoxy-D-xylulose 5-phosphate: step 2/6. In terms of biological role, catalyzes the formation of 4-diphosphocytidyl-2-C-methyl-D-erythritol from CTP and 2-C-methyl-D-erythritol 4-phosphate (MEP). The polypeptide is 2-C-methyl-D-erythritol 4-phosphate cytidylyltransferase (Synechococcus sp. (strain CC9902)).